The primary structure comprises 1051 residues: SWI/SNF-related matrix-associated actin-dependent regulator of chromatin subfamily A member 5 (1051 aa).

The span at M1 to S15 shows a compositional bias: pro residues. Residues M1 to E81 are disordered. S2 carries the post-translational modification N-acetylserine. Gly residues predominate over residues G24–G38. Over residues G39 to A53 the composition is skewed to low complexity. A Phosphothreonine modification is found at T55. S65 is modified (phosphoserine). Residues K68 to E81 show a composition bias toward basic and acidic residues. Residue K82 forms a Glycyl lysine isopeptide (Lys-Gly) (interchain with G-Cter in SUMO2) linkage. T112 bears the Phosphothreonine mark. S115, S136, and S170 each carry phosphoserine. The 166-residue stretch at I191 to D356 folds into the Helicase ATP-binding domain. D204–T211 contributes to the ATP binding site. The DEAH box motif lies at D307–H310. At K439 the chain carries N6-acetyllysine. Residues V486–V637 form the Helicase C-terminal domain. Glycyl lysine isopeptide (Lys-Gly) (interchain with G-Cter in SUMO2) cross-links involve residues K643, K646, K693, K721, and K734. The residue at position 754 (S754) is a Phosphoserine. 2 consecutive SANT domains span residues Q839–N891 and K942–L1006. Residue K965 forms a Glycyl lysine isopeptide (Lys-Gly) (interchain with G-Cter in SUMO2) linkage. The disordered stretch occupies residues L1014 to L1051. Residues K1022–K1033 show a composition bias toward basic residues. Residues R1034–R1043 show a composition bias toward basic and acidic residues.

This sequence belongs to the SNF2/RAD54 helicase family. ISWI subfamily. In terms of assembly, component of the ACF-5 ISWI chromatin-remodeling complex (also called the ACF/WCRF complex) at least composed of SMARCA5/SNF2H and BAZ1A/ACF1, which regulates the spacing of histone octamers on the DNA template to facilitate access to DNA. Within the complex interacts with BAZ1A/ACF1; the interaction is direct and is required to slide nucleosomes from end to center positions on a DNA template in an ATP-dependent manner. Component of the CHRAC ISWI chromatin-remodeling complex at least composed of SMARCA5/SNF2H, BAZ1A/ACF1, CHRAC1 and POLE3; the complex preferentially binds DNA through the CHRAC1-POLE3 heterodimer and possesses ATP-dependent nucleosome-remodeling activity. Within the complex interacts with BAZ1A/ACF1; the interaction is direct and promotes the interaction with the POLE3-CHRAC1 heterodimer. Within the complex interacts with the POLE3-CHRAC1 heterodimer; the interaction is direct and enhances nucleosome sliding activity by the SMARCA5/SNF2H and BAZ1A/ACF1 interaction. Neither POLE3 nor CHRAC1 enhances nucleosome sliding activity of the ACF-5 ISWI chromatin remodeling complex. Component of the WICH-5 ISWI chromatin-remodeling complex (also called the WICH complex) at least composed of SMARCA5/SNF2H and BAZ1B/WSTF, which regulates the spacing of histone octamers on the DNA template to facilitate access to DNA. Within the complex interacts with BAZ1B/WSTF. Component of the NoRC-5 ISWI chromatin-remodeling complex (also called the NoRC chromatin-remodeling complex) at least composed of SMARCA5/SNF2H and BAZ2A/TIP5; the complex suppresses rDNA transcription by a combination of nucleosome remodeling, histone deacetylation, and DNA methylation. Within the complex interacts with BAZ2A/TIP5. Within the complex interacts with HDAC1. Component of the BRF-5 ISWI chromatin-remodeling complex at least composed of SMARCA5/SNF2H and BAZ2B. Within the complex interacts with BAZ2B. Component of the NURF-5 ISWI chromatin-remodeling complex at least composed of SMARCA5/SNF2H and BPTF. Within the complex interacts with BPFT. Component of the CERF-5 ISWI chromatin-remodeling complex at least composed of SMARCA5/SNF2H and CECR2. LUZP1 is detected as part of the CERF-5 complex in embryonic stem cells where it is involved in complex stabilization but is not detected in the complex in the testis. Component of the RSF-5 ISWI chromatin-remodeling complex (also called the RSF complex) at least composed of SMARCA5/SNF2H and RSF1. Within the complex interacts with RSF1. Interacts with the cohesin complex component RAD21; the interaction is direct. Interacts with the NuRD complex components HDAC2, RBBP4 and CHD4; the interactions are direct. Interacts with PCNA. Component of the B-WICH complex, at least composed of SMARCA5/SNF2H, BAZ1B/WSTF, SF3B1, DEK, MYO1C, ERCC6, MYBBP1A and DDX21 which positively regulates RNA polymerase III transcription. Interacts with MYO1C. Interacts with BEND3. Interacts with SIRT6; promoting recruitment to DNA damage sites. Ubiquitously expressed.

It localises to the nucleus. It is found in the chromosome. The catalysed reaction is ATP + H2O = ADP + phosphate + H(+). ATPase that possesses intrinsic ATP-dependent nucleosome-remodeling activity. Catalytic subunit of ISWI chromatin-remodeling complexes, which form ordered nucleosome arrays on chromatin and facilitate access to DNA during DNA-templated processes such as DNA replication, transcription, and repair; this may require intact histone H4 tails. Within the ISWI chromatin-remodeling complexes, slides edge- and center-positioned histone octamers away from their original location on the DNA template. Catalytic activity and histone octamer sliding propensity is regulated and determined by components of the ISWI chromatin-remodeling complexes. The BAZ1A/ACF1-, BAZ1B/WSTF-, BAZ2A/TIP5- and BAZ2B-containing ISWI chromatin-remodeling complexes regulate the spacing of nucleosomes along the chromatin and have the ability to slide mononucleosomes to the center of a DNA template in an ATP-dependent manner. The CECR2- and RSF1-containing ISWI chromatin-remodeling complexes do not have the ability to slide mononucleosomes to the center of a DNA template. Binds to core histones together with RSF1, and is required for the assembly of regular nucleosome arrays by the RSF-5 ISWI chromatin-remodeling complex. Involved in DNA replication and together with BAZ1A/ACF1 is required for replication of pericentric heterochromatin in S-phase. Probably plays a role in repression of RNA polymerase I dependent transcription of the rDNA locus, through the recruitment of the SIN3/HDAC1 corepressor complex to the rDNA promoter. The WICH-5 ISWI chromatin-remodeling complex regulates the transcription of various genes, has a role in RNA polymerase I and RNA polymerase III transcription, mediates the histone H2AX phosphorylation at 'Tyr-142', and is involved in the maintenance of chromatin structures during DNA replication processes. Essential component of the NoRC-5 ISWI chromatin-remodeling complex, a complex that mediates silencing of a fraction of rDNA by recruiting histone-modifying enzymes and DNA methyltransferases, leading to heterochromatin formation and transcriptional silencing. Required for embryonic development and differentiation, and the proliferation of early blastocyst-derived stem cells. This chain is SWI/SNF-related matrix-associated actin-dependent regulator of chromatin subfamily A member 5 (Smarca5), found in Mus musculus (Mouse).